The chain runs to 610 residues: Glucoamylase ARB_02327-1 (610 aa).

An N-terminal signal peptide occupies residues 1–18; it reads MRVTSLLWSSLVIPAAVG. A propeptide spanning residues 19 to 24 is cleaved from the precursor; it reads FQVRFK. A glycan (N-linked (GlcNAc...) asparagine) is linked at asparagine 49. Tryptophan 143 is a binding site for substrate. A glycan (N-linked (GlcNAc...) asparagine) is linked at asparagine 194. The active-site Proton acceptor is the aspartate 199. Catalysis depends on glutamate 202, which acts as the Proton donor. Intrachain disulfides connect cysteine 233-cysteine 236, cysteine 245-cysteine 472, and cysteine 285-cysteine 293. One can recognise a CBM20 domain in the interval 504–610; that stretch reads TALPTKNNVR…SGAIKRDTWR (107 aa).

Belongs to the glycosyl hydrolase 15 family.

It is found in the secreted. The catalysed reaction is Hydrolysis of terminal (1-&gt;4)-linked alpha-D-glucose residues successively from non-reducing ends of the chains with release of beta-D-glucose.. This chain is Glucoamylase ARB_02327-1, found in Arthroderma benhamiae (strain ATCC MYA-4681 / CBS 112371) (Trichophyton mentagrophytes).